We begin with the raw amino-acid sequence, 138 residues long: Large ribosomal subunit protein eL14B (138 aa).

The residue at position 2 (serine 2) is an N-acetylserine.

Belongs to the eukaryotic ribosomal protein eL14 family. As to quaternary structure, component of the large ribosomal subunit (LSU). Mature yeast ribosomes consist of a small (40S) and a large (60S) subunit. The 40S small subunit contains 1 molecule of ribosomal RNA (18S rRNA) and 33 different proteins (encoded by 57 genes). The large 60S subunit contains 3 rRNA molecules (25S, 5.8S and 5S rRNA) and 46 different proteins (encoded by 81 genes). N-terminally acetylated by acetyltransferase NatA.

It is found in the cytoplasm. Component of the ribosome, a large ribonucleoprotein complex responsible for the synthesis of proteins in the cell. The small ribosomal subunit (SSU) binds messenger RNAs (mRNAs) and translates the encoded message by selecting cognate aminoacyl-transfer RNA (tRNA) molecules. The large subunit (LSU) contains the ribosomal catalytic site termed the peptidyl transferase center (PTC), which catalyzes the formation of peptide bonds, thereby polymerizing the amino acids delivered by tRNAs into a polypeptide chain. The nascent polypeptides leave the ribosome through a tunnel in the LSU and interact with protein factors that function in enzymatic processing, targeting, and the membrane insertion of nascent chains at the exit of the ribosomal tunnel. This Saccharomyces cerevisiae (strain ATCC 204508 / S288c) (Baker's yeast) protein is Large ribosomal subunit protein eL14B.